Here is a 253-residue protein sequence, read N- to C-terminus: Sulfate transporter CysZ (253 aa).

Helical transmembrane passes span 31–51 (FVIL…WWLF), 72–92 (LSYL…GYFF), 151–171 (IVLL…PVLW), and 222–242 (IPVL…AMWV).

It belongs to the CysZ family.

It is found in the cell inner membrane. Its function is as follows. Possibly involved in sulfate transport. In terms of biological role, high affinity, high specificity proton-dependent sulfate transporter, which mediates sulfate uptake. Provides the sulfur source for the cysteine synthesis pathway. In Salmonella typhimurium (strain LT2 / SGSC1412 / ATCC 700720), this protein is Sulfate transporter CysZ.